The chain runs to 862 residues: DNA mismatch repair protein MutS (862 aa).

613 to 620 (GPNMAGKS) is an ATP binding site.

This sequence belongs to the DNA mismatch repair MutS family.

In terms of biological role, this protein is involved in the repair of mismatches in DNA. It is possible that it carries out the mismatch recognition step. This protein has a weak ATPase activity. This is DNA mismatch repair protein MutS from Desulfitobacterium hafniense (strain Y51).